Reading from the N-terminus, the 388-residue chain is Succinate--CoA ligase [ADP-forming] subunit beta (388 aa).

The ATP-grasp domain maps to 9 to 244 (KQLFAEYGLP…PSQDDAREAH (236 aa)). ATP-binding positions include lysine 46, 53 to 55 (GRG), glutamate 99, threonine 102, and glutamate 107. Residues asparagine 199 and aspartate 213 each contribute to the Mg(2+) site. Residues asparagine 264 and 321–323 (GIV) contribute to the substrate site.

The protein belongs to the succinate/malate CoA ligase beta subunit family. In terms of assembly, heterotetramer of two alpha and two beta subunits. Mg(2+) is required as a cofactor.

The enzyme catalyses succinate + ATP + CoA = succinyl-CoA + ADP + phosphate. It carries out the reaction GTP + succinate + CoA = succinyl-CoA + GDP + phosphate. It participates in carbohydrate metabolism; tricarboxylic acid cycle; succinate from succinyl-CoA (ligase route): step 1/1. Functionally, succinyl-CoA synthetase functions in the citric acid cycle (TCA), coupling the hydrolysis of succinyl-CoA to the synthesis of either ATP or GTP and thus represents the only step of substrate-level phosphorylation in the TCA. The beta subunit provides nucleotide specificity of the enzyme and binds the substrate succinate, while the binding sites for coenzyme A and phosphate are found in the alpha subunit. The chain is Succinate--CoA ligase [ADP-forming] subunit beta from Pseudomonas putida (strain ATCC 700007 / DSM 6899 / JCM 31910 / BCRC 17059 / LMG 24140 / F1).